The primary structure comprises 529 residues: UDP-glucuronosyltransferase 2B23 (529 aa).

Residues 1–24 (MSVKWTSVILLIQLSFYFSSGSCG) form the signal peptide. Residues asparagine 67 and asparagine 68 are each glycosylated (N-linked (GlcNAc...) asparagine). Residues 494–514 (IGFLLACVATVIFIIMKCCLF) form a helical membrane-spanning segment.

Belongs to the UDP-glycosyltransferase family. As to expression, expressed in several tissues, including the prostate, mammary gland, epididymis, testis and ovary.

It localises to the microsome membrane. It is found in the endoplasmic reticulum membrane. The enzyme catalyses glucuronate acceptor + UDP-alpha-D-glucuronate = acceptor beta-D-glucuronoside + UDP + H(+). Functionally, UDPGTs are of major importance in the conjugation and subsequent elimination of potentially toxic xenobiotics and endogenous compounds. This isozyme has glucuronidating capacity on 6 steroids and the bile acid, hyodeoxycholic acid. May potentially play an important role in estrogen and androgen catabolism in peripheral steroid target tissues. The polypeptide is UDP-glucuronosyltransferase 2B23 (UGT2B23) (Macaca fascicularis (Crab-eating macaque)).